Here is a 702-residue protein sequence, read N- to C-terminus: Ribosomal RNA large subunit methyltransferase K/L (702 aa).

Residues 43–154 form the THUMP domain; it reads LVYQSLMWSR…KETASIALDL (112 aa).

The protein belongs to the methyltransferase superfamily. RlmKL family.

The protein resides in the cytoplasm. The catalysed reaction is guanosine(2445) in 23S rRNA + S-adenosyl-L-methionine = N(2)-methylguanosine(2445) in 23S rRNA + S-adenosyl-L-homocysteine + H(+). It catalyses the reaction guanosine(2069) in 23S rRNA + S-adenosyl-L-methionine = N(2)-methylguanosine(2069) in 23S rRNA + S-adenosyl-L-homocysteine + H(+). Its function is as follows. Specifically methylates the guanine in position 2445 (m2G2445) and the guanine in position 2069 (m7G2069) of 23S rRNA. The protein is Ribosomal RNA large subunit methyltransferase K/L of Escherichia coli O6:K15:H31 (strain 536 / UPEC).